Here is a 596-residue protein sequence, read N- to C-terminus: Sensor protein ChvG (596 aa).

The interval 1-22 (MLKKTPETVSDSDDAEERGSER) is disordered. The Cytoplasmic segment spans residues 1 to 47 (MLKKTPETVSDSDDAEERGSERRHRIHPLTIIRRIFGNAVFSSLTRR). Residues 48-68 (ILFFNVAATVVLVGGILYLNQ) traverse the membrane as a helical segment. Over 69–283 (FREGLIDARV…VHAERLAIMR (215 aa)) the chain is Periplasmic. A helical membrane pass occupies residues 284-304 (VFGIATLVNIVLSLLLSSTIA). Residues 301-356 (STIATPLRRLSAAAIRVRRGARTREEIPDFSARQDEIGNLSIALREMTTALYDRID) enclose the HAMP domain. Residues 305 to 596 (TPLRRLSAAA…SLPAAETHER (292 aa)) lie on the Cytoplasmic side of the membrane. Residues 364 to 592 (DVSHELKNPL…RFTLSLPAAE (229 aa)) enclose the Histidine kinase domain. At His367 the chain carries Phosphohistidine.

It is found in the cell inner membrane. The catalysed reaction is ATP + protein L-histidine = ADP + protein N-phospho-L-histidine.. Functionally, member of a two-component regulatory system ChvG/ChvI. Activates ChvI by phosphorylation (Potential). The sequence is that of Sensor protein ChvG (chvG) from Agrobacterium fabrum (strain C58 / ATCC 33970) (Agrobacterium tumefaciens (strain C58)).